Consider the following 425-residue polypeptide: Ribosome biogenesis protein WDR12 homolog (425 aa).

Residues 13 to 94 (LQLHLITKQK…EDTVELEYVE (82 aa)) form a ubiquitin-like (UBL) domain region. WD repeat units lie at residues 106–143 (LHDD…KLTI), 145–187 (GHIA…NSVE), 194–233 (GHER…GGGD), 258–296 (GHRE…IKSE), 298–337 (SGNK…GTLV), 343–383 (GHTQ…APIF), and 387–425 (GHED…GGEK). Positions 227–247 (VRSGGGDSEPSTSKRQKLDQG) are disordered.

This sequence belongs to the WD repeat WDR12/YTM1 family.

The protein resides in the nucleus. The protein localises to the nucleolus. It localises to the nucleoplasm. In terms of biological role, required for maturation of ribosomal RNAs and formation of the large ribosomal subunit. This is Ribosome biogenesis protein WDR12 homolog from Culex quinquefasciatus (Southern house mosquito).